The chain runs to 428 residues: Probable pectin lyase F (428 aa).

Positions 1-20 (MVLLHPLLTAAALLGASARA) are cleaved as a signal peptide. A disulfide bond links C83 and C107. The active site involves R257. Residue N276 is glycosylated (N-linked (GlcNAc...) asparagine). C324 and C332 are joined by a disulfide. Residues 383–428 (GSGGSGAASSSVSITPSPTSSAIPSSSATPSSSAYARRHYARHHHY) are disordered. Low complexity predominate over residues 389–417 (AASSSVSITPSPTSSAIPSSSATPSSSAY). Residues 418-428 (ARRHYARHHHY) show a composition bias toward basic residues.

Belongs to the polysaccharide lyase 1 family.

Its subcellular location is the secreted. The enzyme catalyses Eliminative cleavage of (1-&gt;4)-alpha-D-galacturonan methyl ester to give oligosaccharides with 4-deoxy-6-O-methyl-alpha-D-galact-4-enuronosyl groups at their non-reducing ends.. Pectinolytic enzymes consist of four classes of enzymes: pectin lyase, polygalacturonase, pectin methylesterase and rhamnogalacturonase. Among pectinolytic enzymes, pectin lyase is the most important in depolymerization of pectin, since it cleaves internal glycosidic bonds of highly methylated pectins. The sequence is that of Probable pectin lyase F (pelF) from Aspergillus oryzae (strain ATCC 42149 / RIB 40) (Yellow koji mold).